The chain runs to 436 residues: p-aminobenzoyl-glutamate hydrolase subunit A (436 aa).

The protein belongs to the peptidase M20 family. As to quaternary structure, forms a heterodimer with AbgB. Requires Mn(2+) as cofactor.

Functionally, component of the p-aminobenzoyl-glutamate hydrolase multicomponent enzyme system which catalyzes the cleavage of p-aminobenzoyl-glutamate (PABA-GLU) to form p-aminobenzoate (PABA) and glutamate. AbgAB does not degrade dipeptides and the physiological role of abgABT should be clarified. This is p-aminobenzoyl-glutamate hydrolase subunit A (abgA) from Escherichia coli (strain K12).